The sequence spans 348 residues: Ion-translocating oxidoreductase complex subunit D (348 aa).

The next 5 helical transmembrane spans lie at Leu-15–Ala-35, Tyr-36–Ile-56, Pro-67–Ser-87, Ile-88–Ala-108, and Val-125–Ile-145. Thr-186 bears the FMN phosphoryl threonine mark. Transmembrane regions (helical) follow at residues Leu-212–Ile-232, Ile-241–Pro-261, Leu-265–Thr-285, Leu-298–Pro-318, and Ala-320–Gln-340.

It belongs to the NqrB/RnfD family. As to quaternary structure, the complex is composed of six subunits: RnfA, RnfB, RnfC, RnfD, RnfE and RnfG. It depends on FMN as a cofactor.

The protein resides in the cell inner membrane. Its function is as follows. Part of a membrane-bound complex that couples electron transfer with translocation of ions across the membrane. The protein is Ion-translocating oxidoreductase complex subunit D of Actinobacillus pleuropneumoniae serotype 5b (strain L20).